The chain runs to 182 residues: UPF0316 protein Sde_0566 (182 aa).

The next 3 membrane-spanning stretches (helical) occupy residues 7-27 (VAPELLALLIFVSRVIDVSLG), 41-61 (LAAFIGFFEIMIWLVAAGQVF), and 67-87 (WYLALAYAGGFSMGNYVGMWI).

This sequence belongs to the UPF0316 family.

It localises to the cell membrane. The chain is UPF0316 protein Sde_0566 from Saccharophagus degradans (strain 2-40 / ATCC 43961 / DSM 17024).